A 653-amino-acid polypeptide reads, in one-letter code: Threonine--tRNA ligase (653 aa).

The region spanning 1–61 is the TGS domain; that stretch reads MIKITFPDGN…NEDAEVKLFK (61 aa). Positions 243 to 542 are catalytic; that stretch reads DHRKIGKELE…LIEHTAGKFP (300 aa). Residues cysteine 338, histidine 389, and histidine 519 each coordinate Zn(2+).

It belongs to the class-II aminoacyl-tRNA synthetase family. In terms of assembly, homodimer. Requires Zn(2+) as cofactor.

It is found in the cytoplasm. It carries out the reaction tRNA(Thr) + L-threonine + ATP = L-threonyl-tRNA(Thr) + AMP + diphosphate + H(+). Functionally, catalyzes the attachment of threonine to tRNA(Thr) in a two-step reaction: L-threonine is first activated by ATP to form Thr-AMP and then transferred to the acceptor end of tRNA(Thr). Also edits incorrectly charged L-seryl-tRNA(Thr). In Porphyromonas gingivalis (strain ATCC BAA-308 / W83), this protein is Threonine--tRNA ligase.